A 479-amino-acid polypeptide reads, in one-letter code: Pyruvate kinase (479 aa).

Arg-36 contacts substrate. Residues Asn-38, Ser-40, and Asp-70 each contribute to the K(+) site. Residue 38-41 (NFSH) participates in ATP binding. ATP is bound by residues Arg-77 and Lys-160. Residue Glu-225 participates in Mg(2+) binding. Residues Gly-251, Asp-252, and Thr-284 each contribute to the substrate site. Mg(2+) is bound at residue Asp-252.

This sequence belongs to the pyruvate kinase family. In terms of assembly, homotetramer. Requires Mg(2+) as cofactor. It depends on K(+) as a cofactor.

It carries out the reaction pyruvate + ATP = phosphoenolpyruvate + ADP + H(+). Its pathway is carbohydrate degradation; glycolysis; pyruvate from D-glyceraldehyde 3-phosphate: step 5/5. With respect to regulation, allosterically activated by AMP and by several sugar phosphates. Belongs to type II PK. This chain is Pyruvate kinase (pykA), found in Buchnera aphidicola subsp. Baizongia pistaciae (strain Bp).